Here is a 474-residue protein sequence, read N- to C-terminus: PRAME family member 2 (474 aa).

One copy of the LRR 1; degenerate repeat lies at 97 to 124 (RWKLQVLDLRDVDENFWARWPGAWALSC). The stretch at 179–203 (HLCCSKLVNYLTPIKYLRKSLKIIY) is one LRR 2; degenerate repeat. The stretch at 204–230 (INSIGELEIHNTCWPHLIRKLYCYLKE) is one LRR 3; degenerate repeat. An LRR 4; degenerate repeat occupies 231–265 (MKTLCKLVFSRCHHYTSDNELEGWLVTRFTSVFLR). LRR repeat units lie at residues 266–291 (LEHL…IRCL), 292–323 (QNPL…GYLK), 324–342 (HLNL…PLGA), 348–375 (AASL…GLSC), and 376–400 (CSQL…LLRH).

It belongs to the PRAME family.

This Homo sapiens (Human) protein is PRAME family member 2.